Here is a 569-residue protein sequence, read N- to C-terminus: Beta-galactoside-specific lectin 3 (569 aa).

The N-terminal stretch at 1 to 33 is a signal peptide; the sequence is MNAVMDSRGAWVSCFLILGLVFGATVKAETKFS. The active site involves glutamate 198. Disulfide bonds link cysteine 280–cysteine 311, cysteine 327–cysteine 346, and cysteine 370–cysteine 387. The propeptide at 288-307 is connecting peptide; sequence EVRYWPLVIRPVLENSGAVD. Residues 314 to 441 form the Ricin B-type lectin 1 domain; the sequence is SEPTVRIVGR…YSLGQGWLAG (128 aa). D-galactose is bound at residue 329–331; it reads DVR. Asparagine 402 and asparagine 442 each carry an N-linked (GlcNAc...) asparagine glycan. Residues 445 to 568 enclose the Ricin B-type lectin 2 domain; it reads APREVTIYGF…GNPNQMWLPV (124 aa). 2 cysteine pairs are disulfide-bonded: cysteine 458–cysteine 471 and cysteine 497–cysteine 514. A D-galactose-binding site is contributed by 541–543; it reads DVA.

The protein belongs to the ribosome-inactivating protein family. Type 2 RIP subfamily. In terms of assembly, disulfide-linked dimer of A and B chains.

The enzyme catalyses Endohydrolysis of the N-glycosidic bond at one specific adenosine on the 28S rRNA.. The A chain is responsible for inhibiting protein synthesis through the catalytic inactivation of 60S ribosomal subunits by removing adenine from position 4,324 of 28S rRNA. The B chain binds to cell receptors and probably facilitates the entry into the cell of the A chain; B chains are also responsible for cell agglutination (lectin activity). Inhibits growth of the human tumor cell line Molt4. The protein is Beta-galactoside-specific lectin 3 of Viscum album (European mistletoe).